A 481-amino-acid polypeptide reads, in one-letter code: RuvB-like helicase 2 (481 aa).

73 to 80 (GEPSTGKT) contacts ATP. Positions 453 to 481 (EEVERDPAAGGGAKRRVEGGGGDAQPMEH) are disordered.

Belongs to the RuvB family. In terms of assembly, forms homohexameric rings. May form a dodecamer with rept made of two stacked hexameric rings. Component of the chromatin remodeling Ino80 complex. Interacts with Myc and pont. As to expression, higher expression occurs in primordia of mesoderm, anterior and posterior midgut and cephalic furrow early in gastrulation, as well as in endoderm and mesoderm lineages during germ band extension. Later in development expression is only maintained in endoderm cells. Expressed in thoracic and abdominal segment neural precursors of all embryonic chordotonal organs.

The protein localises to the nucleus. The enzyme catalyses ATP + H2O = ADP + phosphate + H(+). Acts as a transcriptional coactivator in Wg signaling caused by altered arm signaling. Pont and rept interfere antagonistically with nuclear arm signaling function, and are required to enhance or reduce arm activity, respectively. Also an essential cofactor for the normal function of Myc; required for cellular proliferation and growth. Functionally, proposed core component of the chromatin remodeling Ino80 complex which is involved in transcriptional regulation, DNA replication and probably DNA repair. In Drosophila melanogaster (Fruit fly), this protein is RuvB-like helicase 2.